The primary structure comprises 504 residues: Glycerol kinase (504 aa).

Position 12 (Thr12) interacts with ADP. ATP is bound by residues Thr12, Thr13, and Ser14. Thr12 is a binding site for sn-glycerol 3-phosphate. Arg16 serves as a coordination point for ADP. Positions 82, 83, 134, and 244 each coordinate sn-glycerol 3-phosphate. Arg82, Glu83, Tyr134, Asp244, and Gln245 together coordinate glycerol. Residues Thr266 and Gly309 each coordinate ADP. ATP contacts are provided by Thr266, Gly309, Gln313, and Gly410. The ADP site is built by Gly410 and Asn414.

Belongs to the FGGY kinase family. As to quaternary structure, homotetramer and homodimer (in equilibrium).

The catalysed reaction is glycerol + ATP = sn-glycerol 3-phosphate + ADP + H(+). It functions in the pathway polyol metabolism; glycerol degradation via glycerol kinase pathway; sn-glycerol 3-phosphate from glycerol: step 1/1. Its activity is regulated as follows. Activated by phosphorylation and inhibited by fructose 1,6-bisphosphate (FBP). Functionally, key enzyme in the regulation of glycerol uptake and metabolism. Catalyzes the phosphorylation of glycerol to yield sn-glycerol 3-phosphate. This chain is Glycerol kinase, found in Alkaliphilus oremlandii (strain OhILAs) (Clostridium oremlandii (strain OhILAs)).